The sequence spans 94 residues: Citrate lyase acyl carrier protein (94 aa).

An O-(phosphoribosyl dephospho-coenzyme A)serine modification is found at S14.

Belongs to the CitD family. As to quaternary structure, oligomer with a subunit composition of (alpha,beta,gamma)6.

Its subcellular location is the cytoplasm. Its function is as follows. Covalent carrier of the coenzyme of citrate lyase. This is Citrate lyase acyl carrier protein from Fusobacterium nucleatum subsp. nucleatum (strain ATCC 25586 / DSM 15643 / BCRC 10681 / CIP 101130 / JCM 8532 / KCTC 2640 / LMG 13131 / VPI 4355).